Here is a 135-residue protein sequence, read N- to C-terminus: ARGOS-like protein (135 aa).

The organ Size Related (OSR) domain stretch occupies residues 71–122 (FSLESMVVLVGLTASLLILPLILPPLPPPPFMLLLIPIGIMVLLMVLAFMPS). The next 2 membrane-spanning stretches (helical) occupy residues 76 to 96 (MVVLVGLTASLLILPLILPPL) and 100 to 120 (PFMLLLIPIGIMVLLMVLAFM).

The protein belongs to the plant organ size related (OSR) protein family. Expressed in cotyledons, roots, flowers, siliques and leaves.

It localises to the membrane. It is found in the nucleus. Its subcellular location is the cytoplasm. The protein localises to the endoplasmic reticulum. In terms of biological role, promotes cell expansion-dependent organ growth, probably via a brassinosteroids signaling pathway. Acts downstream of BRI1. The chain is ARGOS-like protein (ARL) from Arabidopsis thaliana (Mouse-ear cress).